A 489-amino-acid chain; its full sequence is Glutamyl-tRNA(Gln) amidotransferase subunit A (489 aa).

Catalysis depends on charge relay system residues Lys80 and Ser160. Ser184 functions as the Acyl-ester intermediate in the catalytic mechanism.

The protein belongs to the amidase family. GatA subfamily. In terms of assembly, heterotrimer of A, B and C subunits.

It carries out the reaction L-glutamyl-tRNA(Gln) + L-glutamine + ATP + H2O = L-glutaminyl-tRNA(Gln) + L-glutamate + ADP + phosphate + H(+). In terms of biological role, allows the formation of correctly charged Gln-tRNA(Gln) through the transamidation of misacylated Glu-tRNA(Gln) in organisms which lack glutaminyl-tRNA synthetase. The reaction takes place in the presence of glutamine and ATP through an activated gamma-phospho-Glu-tRNA(Gln). The sequence is that of Glutamyl-tRNA(Gln) amidotransferase subunit A from Wolbachia sp. subsp. Brugia malayi (strain TRS).